An 858-amino-acid chain; its full sequence is Selenocysteine insertion sequence-binding protein 2 (858 aa).

Disordered stretches follow at residues 127 to 261, 275 to 296, and 327 to 625; these read KPRH…GDVG, SDHT…CTQE, and LKKT…DSAT. Composition is skewed to basic and acidic residues over residues 147–166, 188–197, and 215–224; these read KPSD…RRAD, SSLKSDGYHK, and PEFEFSRLDF. 2 stretches are compositionally biased toward polar residues: residues 281–296 and 327–352; these read AVTS…CTQE and LKKT…NPSY. The short motif at 380 to 387 is the Nuclear localization signal element; it reads KNKKKKEK. Basic residues predominate over residues 418–429; sequence RRHRGQSPKLHS. The segment covering 430 to 447 has biased composition (polar residues); sequence KQQTQNEFKTSGKKSQVP. A compositionally biased stretch (basic and acidic residues) spans 539–548; the sequence is ILKERQERMQ. Composition is skewed to polar residues over residues 554 to 563 and 571 to 582; these read SAVSLTVASD and GASNQTPSQDNP. Residues 678–699 form an RNA-binding region; the sequence is LVLGLREVLKHLKLRKLKCIII. Positions 785–819 are disordered; that stretch reads MRQEQAGEPGPQSPPSPPMQDPIPSTEEGTLPSTG. Pro residues predominate over residues 795–805; it reads PQSPPSPPMQD.

Its subcellular location is the cytoplasm. It is found in the nucleus. MRNA-binding protein that binds to the SECIS (selenocysteine insertion sequence) element present in the 3'-UTR of mRNAs encoding selenoproteins and facilitates the incorporation of the rare amino acid selenocysteine. Insertion of selenocysteine at UGA codons is mediated by SECISBP2 and EEFSEC: SECISBP2 (1) specifically binds the SECIS sequence once the 80S ribosome encounters an in-frame UGA codon and (2) contacts the RPS27A/eS31 of the 40S ribosome before ribosome stalling. (3) GTP-bound EEFSEC then delivers selenocysteinyl-tRNA(Sec) to the 80S ribosome and adopts a preaccommodated state conformation. (4) After GTP hydrolysis, EEFSEC dissociates from the assembly, selenocysteinyl-tRNA(Sec) accommodates, and peptide bond synthesis and selenoprotein elongation occur. The chain is Selenocysteine insertion sequence-binding protein 2 from Mus musculus (Mouse).